We begin with the raw amino-acid sequence, 352 residues long: Dolichol-phosphate mannosyltransferase (352 aa).

Topologically, residues 1 to 229 (MKVSVIIPTY…HIYRLMKWEG (229 aa)) are cytoplasmic. GDP-alpha-D-mannose contacts are provided by P8, Y10, E12, V37, D39, D89, A90, D91, Q93, R117, V156, K178, R202, and K208. Mg(2+)-binding residues include D91 and Q93. Mn(2+) is bound by residues D91 and Q93. A helical membrane pass occupies residues 230–256 (EIDRIVKFSIVGLSGILVNEGFLWLFV). The Extracellular segment spans residues 257–261 (NLGIP). Residues 262-286 (KEIAVIPAVELSILNNFFWNDIWTF) traverse the membrane as a helical segment. Residues 287–293 (KDIRRGS) lie on the Cytoplasmic side of the membrane. The chain crosses the membrane as a helical span at residues 294-320 (IFSRLLKFHIAALSGAVVNFIVYWILL). Residues 321–325 (FLGIH) are Extracellular-facing. The chain crosses the membrane as a helical span at residues 326–350 (YLIANLVGIVLSFGVRYVINRHVTW). Over 351 to 352 (AT) the chain is Cytoplasmic.

It belongs to the glycosyltransferase 2 family. Requires Mg(2+) as cofactor. Mn(2+) serves as cofactor. Ca(2+) is required as a cofactor.

The protein resides in the cell membrane. The catalysed reaction is a di-trans,poly-cis-dolichyl phosphate + GDP-alpha-D-mannose = a di-trans,poly-cis-dolichyl beta-D-mannosyl phosphate + GDP. Its pathway is protein modification; protein glycosylation. Functionally, transfers mannose from GDP-mannose to dolichol monophosphate to form dolichol phosphate mannose (Dol-P-Man) which is the mannosyl donor in pathways leading to N-glycosylation, glycosyl phosphatidylinositol membrane anchoring, and O-mannosylation of proteins. In Pyrococcus furiosus (strain ATCC 43587 / DSM 3638 / JCM 8422 / Vc1), this protein is Dolichol-phosphate mannosyltransferase.